The chain runs to 232 residues: Platelet-activating factor acetylhydrolase IB subunit alpha1 (232 aa).

Residues 1–20 (MSGEGENPASKPTPVQDVQG) are disordered. N-acetylserine is present on Ser2. At Ser2 the chain carries Phosphoserine. Catalysis depends on residues Ser48, Asp193, and His196.

It belongs to the 'GDSL' lipolytic enzyme family. Platelet-activating factor acetylhydrolase IB beta/gamma subunits subfamily. In terms of assembly, forms a catalytic dimer which is either homodimer (alpha1/alpha1 homodimer) or heterodimer with PAFAH1B2 (alpha1/alpha2 heterodimer). Component of the cytosolic (PAF-AH (I)) heterotetrameric enzyme, which is composed of PAFAH1B1 (beta), PAFAH1B2 (alpha2) and PAFAH1B3 (alpha1) subunits. The catalytic activity of the enzyme resides in the alpha1 (PAFAH1B3) and alpha2 (PAFAH1B2) subunits, whereas the beta subunit (PAFAH1B1) has regulatory activity. Trimer formation is not essential for the catalytic activity. Interacts with VLDLR; this interaction may modulate the Reelin pathway.

The protein localises to the cytoplasm. The catalysed reaction is a 1-O-alkyl-2-acetyl-sn-glycero-3-phosphocholine + H2O = a 1-O-alkyl-sn-glycero-3-phosphocholine + acetate + H(+). It catalyses the reaction 1-O-hexadecyl-2-acetyl-sn-glycero-3-phosphocholine + H2O = 1-O-hexadecyl-sn-glycero-3-phosphocholine + acetate + H(+). The enzyme catalyses 1-O-hexadecyl-2-acetyl-sn-glycero-3-phosphate + H2O = 1-O-hexadecyl-sn-glycero-3-phosphate + acetate + H(+). With respect to regulation, beta subunit (PAFAH1B1) inhibits the acetylhydrolase activity of the alpha1/alpha1 catalytic homodimer. In terms of biological role, alpha1 catalytic subunit of the cytosolic type I platelet-activating factor (PAF) acetylhydrolase (PAF-AH (I)) heterotetrameric enzyme that catalyzes the hydrolyze of the acetyl group at the sn-2 position of PAF and its analogs and modulates the action of PAF. The activity and substrate specificity of PAF-AH (I) are affected by its subunit composition. Both alpha1/alpha1 homodimer (PAFAH1B3/PAFAH1B3 homodimer) and alpha1/alpha2 heterodimer(PAFAH1B3/PAFAH1B2 heterodimer) hydrolyze 1-O-alkyl-2-acetyl-sn-glycero-3-phosphoric acid (AAGPA) more efficiently than PAF, but they have little hydrolytic activity towards 1-O-alkyl-2-acetyl-sn-glycero-3-phosphorylethanolamine (AAGPE). Plays an important role during the development of brain. The polypeptide is Platelet-activating factor acetylhydrolase IB subunit alpha1 (Mus musculus (Mouse)).